We begin with the raw amino-acid sequence, 267 residues long: Hydroxynaphthalene reductase-like protein Arp2 (267 aa).

Residues isoleucine 25, asparagine 45, aspartate 71, and asparagine 98 each coordinate NADP(+). Catalysis depends on proton donor residues serine 147 and serine 148. The NADP(+) site is built by tyrosine 162, lysine 166, valine 195, and threonine 197. The active-site Proton acceptor is tyrosine 162. The active-site Lowers pKa of active site Tyr is the lysine 166.

The protein belongs to the short-chain dehydrogenases/reductases (SDR) family.

Hydroxynaphthalene reductase-like protein; part of the Pks2 gene cluster that mediates the formation of infectious structures (appressoria), enabling these fungi to kill insects faster. The product of the Pks2 gene cluster is different from the one of Pks1 and has still not been identified. In Metarhizium anisopliae (strain ARSEF 549), this protein is Hydroxynaphthalene reductase-like protein Arp2.